Consider the following 589-residue polypeptide: MGGEAGERRLGRAMSFGIPDVALGLVMGFVEDPWDRDAISLVCRHWCRVDALSRKHVTVAMAYSTTPDRLFRRFPCLESLKLKAKPRAAMFNLIPEDWGGSASPWIRQLSASFHFLKALHLRRMIVSDDDLDVLVRAKAHMLSSFKLDRCSGFSTSSLALVARTCKKLETLFLEDSIIAEKENDEWIRELATNNSVLETLNFFLTDLRASPAYLTLLVRNCRRLKVLKISECFMLDLVDLFRTAEILQDFAGGSFDDQGQVEESRNYENYYFPPSLLRLSLLYMGTKEMQVLFPYGAALKKLDLQFTFLSTEDHCQLVQRCPNLEILEVRDVIGDRGLEVVAQTCKKLQRLRVERGDDDQGGLEDEHGMVTQVGLMAVAQGCPHLEYWAVHVTDITNAALEAIGTYSSSLNDFRLVLLDREANITESPLDNGVRALLRGCTKLRRFAFYVRPGALSDVGLGYIGEFSKTIRYMLLGNVGESDQGLLQLSTGCPSLQKLELRGCFFSERALAVAVLQLKSLRYLWVQGYKASPNGTDLMAMVRPFWNIEIIAPNQDEVCPDGQAQILAYYSLAGMRSDYPHSVIPLYPSV.

Residues 18-59 (IPDVALGLVMGFVEDPWDRDAISLVCRHWCRVDALSRKHVTV) form the F-box domain. Jasmonate-binding residues include R87, R352, R414, and R501.

Interacts with TIFY9/JAZ5, TIFY11C/JAZ11 and TIFY11D/JAZ12 in a coronatine-dependent manner.

Functionally, involved in jasmonate (JA) signaling. Required for jasmonate signaling in plant defense responses. Component of SCF(COI1) E3 ubiquitin ligase complexes, which may mediate the ubiquitination and subsequent proteasomal degradation of target proteins, including TIFY/JAZ family. The chain is Coronatine-insensitive protein homolog 2 from Oryza sativa subsp. indica (Rice).